Reading from the N-terminus, the 334-residue chain is L-lactate dehydrogenase B-A chain (334 aa).

NAD(+)-binding positions include 30 to 58 and Arg-100; that span reads GQVG…VEDR. Substrate contacts are provided by Arg-107, Asn-139, and Arg-170. An NAD(+)-binding site is contributed by Asn-139. His-194 functions as the Proton acceptor in the catalytic mechanism. Thr-249 is a substrate binding site.

It belongs to the LDH/MDH superfamily. LDH family. As to quaternary structure, homotetramer.

It is found in the cytoplasm. The catalysed reaction is (S)-lactate + NAD(+) = pyruvate + NADH + H(+). The protein operates within fermentation; pyruvate fermentation to lactate; (S)-lactate from pyruvate: step 1/1. The protein is L-lactate dehydrogenase B-A chain (ldhba) of Danio rerio (Zebrafish).